The following is a 557-amino-acid chain: Hyaluronan synthase 3 (557 aa).

Topologically, residues 1–10 (MPGKFQTGLR) are cytoplasmic. The helical transmembrane segment at 11-31 (VLATCLFALLVLGGILVAYVT) threads the bilayer. Residues 32 to 44 (GYQFIHTDRHHLS) lie on the Extracellular side of the membrane. A helical membrane pass occupies residues 45-65 (FGLYGAILGLHLLSQSLFAFL). Over 66–367 (EHRKMRGGGR…NALWFHKHHL (302 aa)) the chain is Cytoplasmic. A helical membrane pass occupies residues 368-388 (WMTYESVVTGFFPFFLVATVV). Over 389-398 (QLFYRGRVWN) the chain is Extracellular. Residues 399 to 419 (ILLFLLTVQLVGILKATYACI) form a helical membrane-spanning segment. Residues 420–430 (LRGNAEMIFMS) are Cytoplasmic-facing. A helical transmembrane segment spans residues 431–451 (LYSLLYMTSLLPAKIFAVITI). At 452 to 463 (KKSGWGTSGRRK) the chain is on the extracellular side. A helical membrane pass occupies residues 464–484 (LVVNFMGMVPVSVWFCILLGG). The Cytoplasmic segment spans residues 485-501 (LVYTAYCQSHDPFTETE). The chain crosses the membrane as a helical span at residues 502–522 (LLFLLTGAILYGCYWVALLSL). Residues 523–557 (YLALIARRCGKRQELYNLALEEVSEPEPAAKAIKP) lie on the Extracellular side of the membrane.

This sequence belongs to the NodC/HAS family. Requires Mg(2+) as cofactor. In terms of processing, O-GlcNAcylation increases the hyaluronan synthase activity, HAS3 stability and its plasma membrane residence. The concentration of UDP-GlcNAc controls the level of O-GlcNAc modification.

The protein localises to the cell membrane. The protein resides in the golgi apparatus membrane. Its subcellular location is the golgi apparatus. It is found in the trans-Golgi network membrane. It localises to the cytoplasmic vesicle. The catalysed reaction is [hyaluronan](n) + UDP-N-acetyl-alpha-D-glucosamine = N-acetyl-beta-D-glucosaminyl-(1-&gt;4)-[hyaluronan](n) + UDP + H(+). It catalyses the reaction N-acetyl-beta-D-glucosaminyl-(1-&gt;4)-[hyaluronan](n) + UDP-alpha-D-glucuronate = [hyaluronan](n+1) + UDP + H(+). The protein operates within glycan biosynthesis; hyaluronan biosynthesis. Functionally, catalyzes the addition of GlcNAc or GlcUA monosaccharides to the nascent hyaluronan polymer. Therefore, it is essential to hyaluronan synthesis a major component of most extracellular matrices that has a structural role in tissues architectures and regulates cell adhesion, migration and differentiation. This is one of three isoenzymes responsible for cellular hyaluronan synthesis. This chain is Hyaluronan synthase 3 (has3), found in Xenopus laevis (African clawed frog).